The sequence spans 395 residues: S-adenosylmethionine synthase 5 (395 aa).

A Mg(2+)-binding site is contributed by Glu10. His16 is a binding site for ATP. Residue Glu44 coordinates K(+). Residues Glu57 and Gln100 each contribute to the L-methionine site. Residues 168 to 170 (DGK), 236 to 239 (SGRF), Asp247, 253 to 254 (RK), Ala270, Lys274, and Lys278 each bind ATP. Residue Asp247 participates in L-methionine binding. An L-methionine-binding site is contributed by Lys278.

It belongs to the AdoMet synthase family. As to quaternary structure, homotetramer. It depends on Mn(2+) as a cofactor. The cofactor is Mg(2+). Co(2+) serves as cofactor. Requires K(+) as cofactor.

Its subcellular location is the cytoplasm. It carries out the reaction L-methionine + ATP + H2O = S-adenosyl-L-methionine + phosphate + diphosphate. Its pathway is amino-acid biosynthesis; S-adenosyl-L-methionine biosynthesis; S-adenosyl-L-methionine from L-methionine: step 1/1. Its function is as follows. Catalyzes the formation of S-adenosylmethionine from methionine and ATP. The reaction comprises two steps that are both catalyzed by the same enzyme: formation of S-adenosylmethionine (AdoMet) and triphosphate, and subsequent hydrolysis of the triphosphate. The sequence is that of S-adenosylmethionine synthase 5 (METK5) from Populus trichocarpa (Western balsam poplar).